Here is a 486-residue protein sequence, read N- to C-terminus: Ribulose bisphosphate carboxylase large chain (486 aa).

Substrate-binding residues include asparagine 126 and threonine 176. The Proton acceptor role is filled by lysine 178. Residue lysine 180 coordinates substrate. Residues lysine 204, aspartate 206, and glutamate 207 each coordinate Mg(2+). An N6-carboxylysine modification is found at lysine 204. The active-site Proton acceptor is histidine 296. 3 residues coordinate substrate: arginine 297, histidine 329, and serine 381.

Belongs to the RuBisCO large chain family. Type I subfamily. As to quaternary structure, heterohexadecamer of 8 large chains and 8 small chains. Requires Mg(2+) as cofactor.

The enzyme catalyses 2 (2R)-3-phosphoglycerate + 2 H(+) = D-ribulose 1,5-bisphosphate + CO2 + H2O. It carries out the reaction D-ribulose 1,5-bisphosphate + O2 = 2-phosphoglycolate + (2R)-3-phosphoglycerate + 2 H(+). In terms of biological role, ruBisCO catalyzes two reactions: the carboxylation of D-ribulose 1,5-bisphosphate, the primary event in carbon dioxide fixation, as well as the oxidative fragmentation of the pentose substrate. Both reactions occur simultaneously and in competition at the same active site. The protein is Ribulose bisphosphate carboxylase large chain of Sinorhizobium medicae (strain WSM419) (Ensifer medicae).